The chain runs to 500 residues: Vitamin D(3) 25-hydroxylase (500 aa).

Cysteine 446 is a binding site for heme.

This sequence belongs to the cytochrome P450 family. It depends on heme as a cofactor. In terms of tissue distribution, found in liver and kidney.

It is found in the endoplasmic reticulum membrane. The protein resides in the microsome membrane. It carries out the reaction calciol + reduced [NADPH--hemoprotein reductase] + O2 = calcidiol + oxidized [NADPH--hemoprotein reductase] + H2O + H(+). The enzyme catalyses alfacalcidol + reduced [NADPH--hemoprotein reductase] + O2 = calcitriol + oxidized [NADPH--hemoprotein reductase] + H2O + H(+). It catalyses the reaction dodecanoate + reduced [NADPH--hemoprotein reductase] + O2 = 12-hydroxydodecanoate + oxidized [NADPH--hemoprotein reductase] + H2O + H(+). The catalysed reaction is dodecanoate + reduced [NADPH--hemoprotein reductase] + O2 = 11-hydroxydodecanoate + oxidized [NADPH--hemoprotein reductase] + H2O + H(+). It carries out the reaction 5beta-cholestane-3alpha,7alpha-diol + reduced [NADPH--hemoprotein reductase] + O2 = 5beta-cholestane-3alpha,7alpha,25-triol + oxidized [NADPH--hemoprotein reductase] + H2O + H(+). The enzyme catalyses 5beta-cholestane-3alpha,7alpha,12alpha-triol + reduced [NADPH--hemoprotein reductase] + O2 = 5beta-cholestane-3alpha,7alpha,12alpha,25-tetrol + oxidized [NADPH--hemoprotein reductase] + H2O + H(+). Functionally, catalyzes the 25-hydroxylation of vitamin D(3) (calciol), 1alpha-hydroxyvitamin D(3) (alphacalcidiol) and some C27 steroids. In addition the enzyme catalyzes the hydroxylation of positions 11 and 12 of dodecanoate. This Sus scrofa (Pig) protein is Vitamin D(3) 25-hydroxylase (CYP2D25).